The primary structure comprises 223 residues: Cytochrome c biogenesis ATP-binding export protein CcmA (223 aa).

The ABC transporter domain maps to 20–222; sequence LAAHALTYSR…PTRLLHLKKA (203 aa). 52–59 contacts ATP; it reads GPNGIGKT.

Belongs to the ABC transporter superfamily. CcmA exporter (TC 3.A.1.107) family. As to quaternary structure, the complex is composed of two ATP-binding proteins (CcmA) and two transmembrane proteins (CcmB).

It is found in the cell inner membrane. The catalysed reaction is heme b(in) + ATP + H2O = heme b(out) + ADP + phosphate + H(+). Functionally, part of the ABC transporter complex CcmAB involved in the biogenesis of c-type cytochromes; once thought to export heme, this seems not to be the case, but its exact role is uncertain. Responsible for energy coupling to the transport system. The polypeptide is Cytochrome c biogenesis ATP-binding export protein CcmA (Xylella fastidiosa (strain 9a5c)).